Here is a 258-residue protein sequence, read N- to C-terminus: Protein UL24 homolog (258 aa).

Belongs to the herpesviridae UL24 family.

It localises to the virion. Its subcellular location is the host cytoplasm. It is found in the host nucleus. The protein localises to the host nucleolus. The protein resides in the host Golgi apparatus. Functionally, may participate in nuclear egress of viral particles. Plays a role in the dispersal of several host nucleolar proteins including NCL/nucleolin and NPM1. Since deletion of host NCL/nucleolin negatively impact on nuclear egress, UL24 supposedly acts on this process through its effect on host nucleoli. This chain is Protein UL24 homolog, found in Varicella-zoster virus (strain Dumas) (HHV-3).